Here is a 1318-residue protein sequence, read N- to C-terminus: Guanine nucleotide exchange factor LTE1 (1318 aa).

Residues 29-164 (NKNEVIQADI…CLISLKKAWL (136 aa)) enclose the N-terminal Ras-GEF domain. Disordered regions lie at residues 694–718 (LSIL…SESI) and 842–861 (IGSP…AYSQ). Positions 844–861 (SPETASPRKVNSNNAYSQ) are enriched in polar residues. Residues 1073–1314 (ESKDVAQQFT…SQDEIEHLTA (242 aa)) enclose the Ras-GEF domain.

Belongs to the LTE1 family.

It is found in the cytoplasm. It localises to the bud. GDP-GTP exchange factor component of the mitotic exit network (MEN). Fine-tunes the timing of the mitotic exit and couples this event with cytokinesis. May also be involved in proprotein-processing in the secretory pathway. This chain is Guanine nucleotide exchange factor LTE1 (LTE1), found in Candida glabrata (strain ATCC 2001 / BCRC 20586 / JCM 3761 / NBRC 0622 / NRRL Y-65 / CBS 138) (Yeast).